A 581-amino-acid polypeptide reads, in one-letter code: Arginine--tRNA ligase (581 aa).

Positions 126–136 (PNLAKEMHVGH) match the 'HIGH' region motif.

It belongs to the class-I aminoacyl-tRNA synthetase family. As to quaternary structure, monomer.

It localises to the cytoplasm. It carries out the reaction tRNA(Arg) + L-arginine + ATP = L-arginyl-tRNA(Arg) + AMP + diphosphate. The polypeptide is Arginine--tRNA ligase (Shewanella sp. (strain ANA-3)).